A 523-amino-acid polypeptide reads, in one-letter code: 2-isopropylmalate synthase (523 aa).

The Pyruvate carboxyltransferase domain occupies 12–274 (VVIFDTTLRD…WNKIDTTQLT (263 aa)). Mn(2+) is bound by residues D21, H209, H211, and N245. Residues 398-523 (KLLSLSVIAG…AQGAAAAAAS (126 aa)) form a regulatory domain region.

Belongs to the alpha-IPM synthase/homocitrate synthase family. LeuA type 1 subfamily. As to quaternary structure, homodimer. Mn(2+) is required as a cofactor.

The protein localises to the cytoplasm. It carries out the reaction 3-methyl-2-oxobutanoate + acetyl-CoA + H2O = (2S)-2-isopropylmalate + CoA + H(+). It participates in amino-acid biosynthesis; L-leucine biosynthesis; L-leucine from 3-methyl-2-oxobutanoate: step 1/4. In terms of biological role, catalyzes the condensation of the acetyl group of acetyl-CoA with 3-methyl-2-oxobutanoate (2-ketoisovalerate) to form 3-carboxy-3-hydroxy-4-methylpentanoate (2-isopropylmalate). This Bradyrhizobium sp. (strain BTAi1 / ATCC BAA-1182) protein is 2-isopropylmalate synthase.